Here is a 450-residue protein sequence, read N- to C-terminus: F-box protein KIB3 (450 aa).

In terms of domain architecture, F-box spans 20–50; the sequence is DLVRLILERLSFVDFHRARCVSSTWYVASKS.

The protein localises to the cytoplasm. Its subcellular location is the nucleus. It localises to the nucleolus. Its function is as follows. Component of SCF(ASK-cullin-F-box) E3 ubiquitin ligase complexes, which may mediate the ubiquitination and subsequent proteasomal degradation of target proteins. Required for brassinosteroid (BR) signal transduction. Mediates ASK7/BIN2/SK21 inactivation both by competing with substrate binding (e.g. BZR1) and by promoting its ubiquitination and subsequent proteasomal degradation. In Arabidopsis thaliana (Mouse-ear cress), this protein is F-box protein KIB3.